Consider the following 282-residue polypeptide: Tumor necrosis factor ligand superfamily member 6 (282 aa).

Over 1–82 the chain is Cytoplasmic; the sequence is MQQPFNYPYP…KKKRDHNAGL (82 aa). Residues 30-73 are disordered; sequence FPCPASVPGRPGQRRPPPPPPPPPPPPTLLPSRPLPPLPPPSLK. Residues 43 to 71 show a composition bias toward pro residues; the sequence is RRPPPPPPPPPPPPTLLPSRPLPPLPPPS. A helical; Signal-anchor for type II membrane protein transmembrane segment spans residues 83 to 103; that stretch reads CLLVMFFMVLVALVGLGLGMF. The Extracellular portion of the chain corresponds to 104 to 282; sequence QLFHLQKELT…SKTFFGLYKL (179 aa). A compositionally biased stretch (basic and acidic residues) spans 119–132; that stretch reads ASQRHTESSLEKQI. Residues 119-140 form a disordered region; it reads ASQRHTESSLEKQIGHPNLPSE. The THD domain occupies 146 to 282; sequence KVAHLTGKPN…SKTFFGLYKL (137 aa). Residue N185 is glycosylated (N-linked (GlcNAc...) asparagine). C203 and C234 are disulfide-bonded. N-linked (GlcNAc...) asparagine glycans are attached at residues N251 and N261.

The protein belongs to the tumor necrosis factor family. In terms of assembly, homotrimer. Interacts with ARHGAP9, BAIAP2L1, BTK, CACNB3, CACNB4, CRK, DLG2, DNMBP, DOCK4, EPS8L3, FGR, FYB1, FYN, HCK, ITK, ITSN2, KALRN, LYN, MACC1, MIA, MPP4, MYO15A, NCF1, NCK1, NCK2, NCKIPSD, OSTF1, PIK3R1, PSTPIP1, RIMBP3C, SAMSN1, SH3GL3, SH3PXD2B, SH3PXD2A, SH3RF2, SKAP2, SNX33, SNX9, SORBS3, SPTA1, SRC, SRGAP1, SRGAP2, SRGAP3, TEC, TJP3 and YES1. Post-translationally, the soluble form derives from the membrane form by proteolytic processing. The membrane-bound form undergoes two successive intramembrane proteolytic cleavages. The first one is processed by ADAM10 producing an N-terminal fragment, which lacks the receptor-binding extracellular domain. This ADAM10-processed FasL (FasL APL) remnant form is still membrane anchored and further processed by SPPL2A that liberates the FasL intracellular domain (FasL ICD). FasL shedding by ADAM10 is a prerequisite for subsequent intramembrane cleavage by SPPL2A in T-cells. Phosphorylated by FGR on tyrosine residues; this is required for ubiquitination and subsequent internalization. In terms of processing, N-glycosylated. Glycosylation enhances apoptotic activity. Post-translationally, monoubiquitinated.

It is found in the cell membrane. Its subcellular location is the cytoplasmic vesicle lumen. The protein resides in the lysosome lumen. The protein localises to the secreted. It localises to the nucleus. In terms of biological role, cytokine that binds to TNFRSF6/FAS, a receptor that transduces the apoptotic signal into cells. Involved in cytotoxic T-cell-mediated apoptosis, natural killer cell-mediated apoptosis and in T-cell development. Initiates fratricidal/suicidal activation-induced cell death (AICD) in antigen-activated T-cells contributing to the termination of immune responses. TNFRSF6/FAS-mediated apoptosis also has a role in the induction of peripheral tolerance. Binds to TNFRSF6B/DcR3, a decoy receptor that blocks apoptosis. Its function is as follows. Induces FAS-mediated activation of NF-kappa-B, initiating non-apoptotic signaling pathways. Can induce apoptosis but does not appear to be essential for this process. Cytoplasmic form induces gene transcription inhibition. In Sus scrofa (Pig), this protein is Tumor necrosis factor ligand superfamily member 6 (FASLG).